An 883-amino-acid chain; its full sequence is Phosphoenolpyruvate carboxylase (883 aa).

Catalysis depends on residues His-138 and Lys-546.

This sequence belongs to the PEPCase type 1 family. It depends on Mg(2+) as a cofactor.

The catalysed reaction is oxaloacetate + phosphate = phosphoenolpyruvate + hydrogencarbonate. Forms oxaloacetate, a four-carbon dicarboxylic acid source for the tricarboxylic acid cycle. This is Phosphoenolpyruvate carboxylase from Salmonella dublin (strain CT_02021853).